The primary structure comprises 332 residues: tRNA-dihydrouridine(20/20a) synthase (332 aa).

FMN-binding positions include 19–21 (PML) and Q71. The active-site Proton donor is the C101. Residues K140, H173, 213–215 (NGG), and 235–236 (GR) each bind FMN.

The protein belongs to the Dus family. DusA subfamily. The cofactor is FMN.

The enzyme catalyses 5,6-dihydrouridine(20) in tRNA + NADP(+) = uridine(20) in tRNA + NADPH + H(+). It carries out the reaction 5,6-dihydrouridine(20) in tRNA + NAD(+) = uridine(20) in tRNA + NADH + H(+). It catalyses the reaction 5,6-dihydrouridine(20a) in tRNA + NADP(+) = uridine(20a) in tRNA + NADPH + H(+). The catalysed reaction is 5,6-dihydrouridine(20a) in tRNA + NAD(+) = uridine(20a) in tRNA + NADH + H(+). In terms of biological role, catalyzes the synthesis of 5,6-dihydrouridine (D), a modified base found in the D-loop of most tRNAs, via the reduction of the C5-C6 double bond in target uridines. Specifically modifies U20 and U20a in tRNAs. The chain is tRNA-dihydrouridine(20/20a) synthase from Salmonella typhimurium (strain LT2 / SGSC1412 / ATCC 700720).